Reading from the N-terminus, the 256-residue chain is Extracellular serine-rich protein ARB_03024 (256 aa).

The first 19 residues, 1-19, serve as a signal peptide directing secretion; it reads MVATKSVLSAVALAGVAAA. A disordered region spans residues 135–235; the sequence is KIVPQSGSPT…TPTASPGAAA (101 aa). A compositionally biased stretch (gly residues) spans 149–159; sequence GTLGGSGGSGG. Low complexity-rich tracts occupy residues 160–204 and 215–235; these read SSSS…QSTP and PSAT…GAAA. A233 carries GPI-anchor amidated alanine lipidation. A propeptide spans 234-256 (removed in mature form); sequence AAGLKGSAVLAGVVALGAWIGLL.

The protein resides in the cell membrane. It is found in the secreted. The chain is Extracellular serine-rich protein ARB_03024 from Arthroderma benhamiae (strain ATCC MYA-4681 / CBS 112371) (Trichophyton mentagrophytes).